A 539-amino-acid chain; its full sequence is CTP synthase (539 aa).

An amidoligase domain region spans residues 1–268 (MSFKCIFLTG…STFITEKLGL (268 aa)). Ser14 provides a ligand contact to CTP. Residue Ser14 participates in UTP binding. 15-20 (SLGKGL) is an ATP binding site. Tyr55 lines the L-glutamine pocket. Asp72 contacts ATP. Mg(2+) contacts are provided by Asp72 and Glu142. Residues 149–151 (DIE), 188–193 (KTKPTQ), and Lys224 contribute to the CTP site. UTP is bound by residues 188-193 (KTKPTQ) and Lys224. The Glutamine amidotransferase type-1 domain occupies 294 to 533 (RIGLVGKYVQ…IQAAILYSRN (240 aa)). Gly353 is a binding site for L-glutamine. Residue Cys380 is the Nucleophile; for glutamine hydrolysis of the active site. Residues 381 to 384 (LGMQ), Glu404, and Arg461 contribute to the L-glutamine site. Catalysis depends on residues His506 and Glu508.

The protein belongs to the CTP synthase family. In terms of assembly, homotetramer.

It carries out the reaction UTP + L-glutamine + ATP + H2O = CTP + L-glutamate + ADP + phosphate + 2 H(+). It catalyses the reaction L-glutamine + H2O = L-glutamate + NH4(+). The enzyme catalyses UTP + NH4(+) + ATP = CTP + ADP + phosphate + 2 H(+). It functions in the pathway pyrimidine metabolism; CTP biosynthesis via de novo pathway; CTP from UDP: step 2/2. With respect to regulation, allosterically activated by GTP, when glutamine is the substrate; GTP has no effect on the reaction when ammonia is the substrate. The allosteric effector GTP functions by stabilizing the protein conformation that binds the tetrahedral intermediate(s) formed during glutamine hydrolysis. Inhibited by the product CTP, via allosteric rather than competitive inhibition. In terms of biological role, catalyzes the ATP-dependent amination of UTP to CTP with either L-glutamine or ammonia as the source of nitrogen. Regulates intracellular CTP levels through interactions with the four ribonucleotide triphosphates. The protein is CTP synthase of Chlamydia felis (strain Fe/C-56) (Chlamydophila felis).